Reading from the N-terminus, the 864-residue chain is Xylosyltransferase 2 (864 aa).

The Cytoplasmic portion of the chain corresponds to 1–15 (MVASARVQKLVRRYK). A helical; Signal-anchor for type II membrane protein membrane pass occupies residues 16-36 (LAIATALAILLLQGLVVWSFS). Residues 37-864 (GLEEDEPGEK…GPVKADGRLR (828 aa)) lie on the Lumenal side of the membrane. 2 disordered regions span residues 39-123 (EEDE…RQNL) and 136-158 (AGFP…DNSF). Basic and acidic residues predominate over residues 53–65 (RPLDPGEGSKDTD). Residues 73-82 (SAGRRHGRWR) show a composition bias toward basic residues. Asn122 is a glycosylation site (N-linked (GlcNAc...) asparagine). 4 cysteine pairs are disulfide-bonded: Cys162-Cys190, Cys206-Cys448, Cys467-Cys480, and Cys469-Cys478. UDP-alpha-D-xylose contacts are provided by residues Val239, Asp267, and 296–298 (TIW). An N-linked (GlcNAc...) asparagine glycan is attached at Asn327. 400–401 (DW) contacts UDP-alpha-D-xylose. UDP-alpha-D-xylose is bound by residues Ser481 and 504–505 (RK). 2 disulfides stabilise this stretch: Cys580-Cys832 and Cys825-Cys838. Asn682 carries N-linked (GlcNAc...) asparagine glycosylation.

Belongs to the glycosyltransferase 14 family. XylT subfamily. Monomer. Requires Mg(2+) as cofactor. Mn(2+) is required as a cofactor. In terms of processing, contains disulfide bonds.

The protein localises to the golgi apparatus membrane. Its subcellular location is the secreted. It carries out the reaction UDP-alpha-D-xylose + L-seryl-[protein] = 3-O-(beta-D-xylosyl)-L-seryl-[protein] + UDP + H(+). Its pathway is glycan metabolism; chondroitin sulfate biosynthesis. It participates in glycan metabolism; heparan sulfate biosynthesis. Catalyzes the first step in the biosynthesis of chondroitin sulfate, heparan sulfate and dermatan sulfate proteoglycans, such as DCN. Transfers D-xylose from UDP-D-xylose to specific serine residues of the core protein. The chain is Xylosyltransferase 2 (Xylt2) from Rattus norvegicus (Rat).